The chain runs to 133 residues: Large ribosomal subunit protein uL15 (133 aa).

The disordered stretch occupies residues 1-64 (MGLENLKPAK…QPLQRRLPKI (64 aa)).

Belongs to the universal ribosomal protein uL15 family. In terms of assembly, part of the 50S ribosomal subunit.

Functionally, binds to the 23S rRNA. This is Large ribosomal subunit protein uL15 from Helicobacter pylori (strain J99 / ATCC 700824) (Campylobacter pylori J99).